Reading from the N-terminus, the 196-residue chain is tRNA(Phe) 7-((3-amino-3-carboxypropyl)-4-demethylwyosine(37)-N(4))-methyltransferase 1 (196 aa).

It belongs to the TYW3 family.

It catalyses the reaction 4-demethyl-7-[(3S)-3-amino-3-carboxypropyl]wyosine(37) in tRNA(Phe) + S-adenosyl-L-methionine = 7-[(3S)-3-amino-3-carboxypropyl]wyosine(37) in tRNA(Phe) + S-adenosyl-L-homocysteine + H(+). Functionally, S-adenosyl-L-methionine-dependent methyltransferase that acts as a component of the wyosine derivatives biosynthesis pathway. Probably methylates N-4 position of wybutosine-86 to produce wybutosine-72. This chain is tRNA(Phe) 7-((3-amino-3-carboxypropyl)-4-demethylwyosine(37)-N(4))-methyltransferase 1, found in Pyrococcus horikoshii (strain ATCC 700860 / DSM 12428 / JCM 9974 / NBRC 100139 / OT-3).